A 528-amino-acid polypeptide reads, in one-letter code: GMP synthase [glutamine-hydrolyzing] (528 aa).

The Glutamine amidotransferase type-1 domain maps to alanine 13–aspartate 204. Cysteine 90 acts as the Nucleophile in catalysis. Residues histidine 178 and glutamate 180 contribute to the active site. The 199-residue stretch at tryptophan 205 to arginine 403 folds into the GMPS ATP-PPase domain. Serine 232–serine 238 provides a ligand contact to ATP.

As to quaternary structure, homodimer.

The catalysed reaction is XMP + L-glutamine + ATP + H2O = GMP + L-glutamate + AMP + diphosphate + 2 H(+). The protein operates within purine metabolism; GMP biosynthesis; GMP from XMP (L-Gln route): step 1/1. Its function is as follows. Catalyzes the synthesis of GMP from XMP. The chain is GMP synthase [glutamine-hydrolyzing] from Prochlorococcus marinus (strain NATL2A).